The following is a 132-amino-acid chain: Small ribosomal subunit protein uS8 (132 aa).

It belongs to the universal ribosomal protein uS8 family. As to quaternary structure, part of the 30S ribosomal subunit. Contacts proteins S5 and S12.

Its function is as follows. One of the primary rRNA binding proteins, it binds directly to 16S rRNA central domain where it helps coordinate assembly of the platform of the 30S subunit. This Renibacterium salmoninarum (strain ATCC 33209 / DSM 20767 / JCM 11484 / NBRC 15589 / NCIMB 2235) protein is Small ribosomal subunit protein uS8.